Consider the following 150-residue polypeptide: Ribonuclease HI (150 aa).

Residues 1–142 enclose the RNase H type-1 domain; sequence MSDSVELFTD…ADQLANRGVD (142 aa). Positions 10, 48, 70, and 134 each coordinate Mg(2+).

The protein belongs to the RNase H family. Monomer. It depends on Mg(2+) as a cofactor.

The protein localises to the cytoplasm. The enzyme catalyses Endonucleolytic cleavage to 5'-phosphomonoester.. Its function is as follows. Endonuclease that specifically degrades the RNA of RNA-DNA hybrids. The polypeptide is Ribonuclease HI (Pseudomonas syringae pv. tomato (strain ATCC BAA-871 / DC3000)).